We begin with the raw amino-acid sequence, 539 residues long: Keratin, type II cytoskeletal 73 (539 aa).

Residues 1–130 form a head region; sequence MNRQFTCKPG…DPEIQKVRAQ (130 aa). Positions 131–166 are coil 1A; the sequence is EREQIKALNNKFASFIDKVRFLEQQNQVLQTKWELL. Residues 131–444 form the IF rod domain; it reads EREQIKALNN…KLLEGEECRM (314 aa). Residues 167-185 form a linker 1 region; that stretch reads QQLDLSNCRRNLEPVYEAH. Positions 186–277 are coil 1B; sequence ISSLQKQLDS…CLYEGEITQM (92 aa). The linker 12 stretch occupies residues 278–301; that stretch reads QSHISDTSVVLSMDNNRNLDLDSI. Residues 302–440 form a coil 2 region; the sequence is IAEVRAQYED…ATYRKLLEGE (139 aa). The interval 441 to 539 is tail; the sequence is ECRMSGEHTS…LGSPSKKTMR (99 aa).

The protein belongs to the intermediate filament family. Heterotetramer of two type I and two type II keratins.

Functionally, has a role in hair formation. Specific component of keratin intermediate filaments in the inner root sheath (IRS) of the hair follicle. This chain is Keratin, type II cytoskeletal 73 (Krt73), found in Mus musculus (Mouse).